Consider the following 58-residue polypeptide: UPF0391 membrane protein Plav_0056 (58 aa).

A run of 2 helical transmembrane segments spans residues 4–24 (WAAVFFIIAVIAAVLGFGGLV) and 30–50 (IAQILFFIFLVLFVVSLIFGV).

The protein belongs to the UPF0391 family.

The protein resides in the cell membrane. This chain is UPF0391 membrane protein Plav_0056, found in Parvibaculum lavamentivorans (strain DS-1 / DSM 13023 / NCIMB 13966).